A 95-amino-acid chain; its full sequence is Defensin-A3 (95 aa).

The N-terminal stretch at 1-19 (MRTLGLLLALLFLAAQTPA) is a signal peptide. A propeptide spanning residues 20 to 61 (QLMGEEAEEATGRPEATEAQEAAAALMAARAADRHVTDPEQQ) is cleaved from the precursor. Cystine bridges form between C66–C93, C68–C82, and C72–C92.

Belongs to the alpha-defensin family. In terms of tissue distribution, highly expressed in spleen, and expressed at lower levels in intestin and lung.

It localises to the secreted. Has antimicrobial activity. This is Defensin-A3 from Ornithorhynchus anatinus (Duckbill platypus).